The chain runs to 195 residues: Protein hunchback (195 aa).

3 disordered regions span residues 16–57 (SHHH…SHTN), 64–83 (LKQQ…QQPM), and 155–195 (LTPP…KYMA). Residues 17–29 (HHHHHHHAHHSHH) are compositionally biased toward basic residues. 2 stretches are compositionally biased toward low complexity: residues 33-44 (SNSNSNASSPHQ) and 66-81 (QQQQ…QQQQ). Positions 176–195 (EPEKEHDLMSNSSEDMKYMA) are enriched in basic and acidic residues.

Belongs to the hunchback C2H2-type zinc-finger protein family.

The protein resides in the nucleus. Gap class segmentation protein that controls development of head structures. This is Protein hunchback (hb) from Drosophila dasycnemia (Fruit fly).